The chain runs to 492 residues: Glycylpeptide N-tetradecanoyltransferase 2 (492 aa).

Residues 1-77 (MAEDSESAAS…SASDSQEIKN (77 aa)) are disordered. The span at 15 to 32 (ELDDQDTCGIDGDNEEEN) shows a compositional bias: acidic residues. Residues 46–57 (KKKKKKQKRKKE) are compositionally biased toward basic residues. Residues 61–72 (SGGTKSDSASDS) are compositionally biased toward polar residues. Histidine 111, tryptophan 116, leucine 244, valine 246, serine 252, arginine 254, valine 255, and alanine 256 together coordinate tetradecanoyl-CoA.

This sequence belongs to the NMT family.

The protein resides in the cytoplasm. It is found in the membrane. The catalysed reaction is N-terminal glycyl-[protein] + tetradecanoyl-CoA = N-tetradecanoylglycyl-[protein] + CoA + H(+). The enzyme catalyses N-terminal glycyl-L-lysyl-[protein] + tetradecanoyl-CoA = N-terminal glycyl-(N(6)-tetradecanoyl)-L-lysyl-[protein] + CoA + H(+). Adds a myristoyl group to the N-terminal glycine residue of certain cellular and viral proteins. Also able to mediate N-terminal lysine myristoylation of proteins. In Danio rerio (Zebrafish), this protein is Glycylpeptide N-tetradecanoyltransferase 2.